A 533-amino-acid polypeptide reads, in one-letter code: GMP synthase [glutamine-hydrolyzing] (533 aa).

One can recognise a Glutamine amidotransferase type-1 domain in the interval Thr12–Lys206. Cys88 acts as the Nucleophile in catalysis. Active-site residues include His180 and Glu182. The GMPS ATP-PPase domain occupies Trp207–Arg408. Residue Ser235 to Thr241 coordinates ATP. XMP-binding residues include Arg308, Asp470, Lys525, and Glu531.

As to quaternary structure, homodimer. The cofactor is Mg(2+).

The protein localises to the cytoplasm. It localises to the cytosol. The catalysed reaction is XMP + L-glutamine + ATP + H2O = GMP + L-glutamate + AMP + diphosphate + 2 H(+). It participates in purine metabolism; GMP biosynthesis; GMP from XMP (L-Gln route): step 1/1. Functionally, catalyzes the conversion of xanthine monophosphate (XMP) to GMP in the presence of glutamine and ATP through an adenyl-XMP intermediate. This Emericella nidulans (strain FGSC A4 / ATCC 38163 / CBS 112.46 / NRRL 194 / M139) (Aspergillus nidulans) protein is GMP synthase [glutamine-hydrolyzing] (gua1).